A 353-amino-acid chain; its full sequence is Endophilin-A1 (353 aa).

Positions 1–21 (MSVAGLKKQFHKATQKVSEKV) are membrane-binding amphipathic helix. The disordered stretch occupies residues 1 to 27 (MSVAGLKKQFHKATQKVSEKVGGAEGT). The binds and tubulates liposomes stretch occupies residues 1–125 (MSVAGLKKQF…DVGEAMKELS (125 aa)). The region spanning 18–249 (SEKVGGAEGT…LEDRIKEASS (232 aa)) is the BAR domain. Residues 60 to 87 (PNPASRAKLSMINTMSKIRGQEKGPGYP) are required for dimerization upon membrane association. Residues 181 to 201 (EELRQALEKFDESKEIAESSM) are a coiled coil. Over residues 243-257 (RIKEASSQPKREYQP) the composition is skewed to basic and acidic residues. The segment at 243-290 (RIKEASSQPKREYQPKPRMSLDFTSGGDNTQHNGGISHATTPKPAGAH) is disordered. Polar residues predominate over residues 264–282 (DFTSGGDNTQHNGGISHAT). The SH3 domain occupies 291 to 350 (MDQPCCRALYDFEPENEGELGFKEGDIITLTNQIDENWYEGMLHGQSGFFPINYVDILVP).

Belongs to the endophilin family. In terms of assembly, monomer; in cytoplasm. Homodimer; when associated with membranes. Associates with MAP4K3. This interaction appears to regulate MAP4K3-mediated JNK activation. Interacts with SYNJ1 and DNM1. In terms of tissue distribution, highly expressed in brain.

It localises to the cytoplasm. The protein localises to the membrane. The protein resides in the early endosome. Its subcellular location is the presynapse. Functionally, implicated in synaptic vesicle endocytosis. May recruit other proteins to membranes with high curvature. This Gallus gallus (Chicken) protein is Endophilin-A1.